The primary structure comprises 1064 residues: Serine protease inhibitor Kazal-type 5 (1064 aa).

A signal peptide spans 1–22 (MKIATVSVLLPLALCLIQDAAS). The region spanning 28–66 (EMCHEFQAFMKNGKLFCPQDKKFFQSLDGIMFINKCATC) is the Kazal-like 1; atypical domain. 21 disulfides stabilise this stretch: Cys-30-Cys-66, Cys-44-Cys-63, Cys-97-Cys-133, Cys-111-Cys-130, Cys-119-Cys-151, Cys-161-Cys-197, Cys-175-Cys-194, Cys-225-Cys-261, Cys-239-Cys-258, Cys-297-Cys-333, Cys-311-Cys-330, Cys-367-Cys-403, Cys-381-Cys-400, Cys-437-Cys-473, Cys-451-Cys-470, Cys-496-Cys-532, Cys-510-Cys-529, Cys-567-Cys-603, Cys-581-Cys-600, Cys-632-Cys-668, and Cys-646-Cys-665. Kazal-like domains lie at 91-153 (APTE…ECKS), 155-216 (NPEQ…ETRI), 219-285 (NAEK…KAEE), 291-352 (REIV…ARAR), 361-423 (TSYA…KSRN), 431-489 (ASFE…KAKR), 490-551 (EAAK…EEKG), 561-622 (EAVQ…PRAK), 626-688 (EAEK…EDQR), 701-757 (GNTQ…KNEY), 768-830 (ESGK…EDRS), 843-905 (NDKE…EKSS), 910-971 (NNAK…EKPS), and 987-1048 (SLDS…KCEE). Residues 676–688 (NEERKRKEEEDQR) are compositionally biased toward basic and acidic residues. The disordered stretch occupies residues 676-705 (NEERKRKEEEDQRNAAGHGSSGGGGGNTQD). Intrachain disulfides connect Cys-707–Cys-743, Cys-721–Cys-740, Cys-774–Cys-810, Cys-788–Cys-807, Cys-849–Cys-885, and Cys-863–Cys-882. The disordered stretch occupies residues 751 to 775 (AERKNEYSRSRSNGTGSESGKDTCD). Residues 818 to 849 (AAEKKKKEDEDRSNTGERSNTGERSNDKEDLC) form a disordered region. Residues 895–905 (ERKKKDEEKSS) are compositionally biased toward basic and acidic residues. A disordered region spans residues 895–915 (ERKKKDEEKSSSKPSNNAKDE). 2 disulfide bridges follow: Cys-916/Cys-952 and Cys-930/Cys-949. A compositionally biased stretch (basic and acidic residues) spans 967–977 (QEKPSHVRASQ). Positions 967–987 (QEKPSHVRASQEEDSPDSFSS) are disordered. 3 cysteine pairs are disulfide-bonded: Cys-993–Cys-1028, Cys-1006–Cys-1025, and Cys-1014–Cys-1046. The interval 1041–1064 (RSTGKCEESSTPGTTAASMPPSDE) is disordered.

Proteolytically processed by furin in individual domains (D1, D5, D6, D8 through D11, and D9 through D15) exhibiting various inhibitory potentials for multiple proteases. As to expression, highly expressed in the thymus and stratum corneum. Also found in the oral mucosa, parathyroid gland, Bartholin's glands, tonsils, and vaginal epithelium. Very low levels are detected in lung, kidney, and prostate.

The protein localises to the secreted. Functionally, serine protease inhibitor, probably important for the anti-inflammatory and/or antimicrobial protection of mucous epithelia. Contribute to the integrity and protective barrier function of the skin by regulating the activity of defense-activating and desquamation-involved proteases. Inhibits KLK5, it's major target, in a pH-dependent manner. Inhibits KLK7, KLK14 CASP14, and trypsin. This Homo sapiens (Human) protein is Serine protease inhibitor Kazal-type 5 (SPINK5).